The following is a 130-amino-acid chain: MKKREDMTEMQVHVCLNQGTEYPFTGKLLDQQKKGLYRCVVCHSPLFVSDTKFDAGCGWPSFFQAISPEAIRYLDDYTLSRPRTEIRCGQCDAHLGHVFEDGPPPTGLRYCVNSVSMAFEDSETGELIEG.

Positions 1 to 122 constitute a MsrB domain; it reads MKKREDMTEM…NSVSMAFEDS (122 aa). Cys39, Cys42, Cys88, and Cys91 together coordinate Zn(2+). The active-site Nucleophile is the Cys111.

This sequence belongs to the MsrB Met sulfoxide reductase family. The cofactor is Zn(2+).

It catalyses the reaction L-methionyl-[protein] + [thioredoxin]-disulfide + H2O = L-methionyl-(R)-S-oxide-[protein] + [thioredoxin]-dithiol. This Pasteurella multocida (strain Pm70) protein is Peptide methionine sulfoxide reductase MsrB.